A 299-amino-acid polypeptide reads, in one-letter code: Taste receptor type 2 member 50 (299 aa).

Residue methionine 1 is a topological domain, extracellular. Residues 2 to 22 (VTFLHIFFSILILVLFVLGNF) traverse the membrane as a helical segment. Residues 23–55 (ANGFIALVNFIDLVKRKKISSADQILTALAVSR) are Cytoplasmic-facing. The chain crosses the membrane as a helical span at residues 56 to 76 (IGLLWALLLNWYLTVLNPAFY). Residues 77–87 (SVELRITSYNA) are Extracellular-facing. A helical transmembrane segment spans residues 88-108 (WVVTNHFSMWLAASLSIFYLL). Residues 109 to 126 (KIANFSNLIFLHLKRRVR) lie on the Cytoplasmic side of the membrane. Residues 127–147 (SVILVILLGPLTFLVCHLFVA) traverse the membrane as a helical segment. Over 148–181 (NMDESMSAEEYEGNMTGKLKLRNTVHLSYLTVTT) the chain is Extracellular. A glycan (N-linked (GlcNAc...) asparagine) is linked at asparagine 161. Residues 182–202 (LWSFIPFTLSLISFLMLICSL) form a helical membrane-spanning segment. Residues 203 to 229 (CKHVKKMQLHGEGSQDLSTKVHIKALQ) lie on the Cytoplasmic side of the membrane. Residues 230–250 (TLISFLLLCAIFFLFLIISIW) traverse the membrane as a helical segment. The Extracellular portion of the chain corresponds to 251–259 (NPRRLQNDP). Residues 260 to 280 (VVVVSKAVGNIYLALDSFILI) form a helical membrane-spanning segment. The Cytoplasmic portion of the chain corresponds to 281 to 299 (WRTKKLKHTFLLILCQIRC).

It belongs to the G-protein coupled receptor T2R family.

The protein localises to the membrane. Its function is as follows. Receptor that may play a role in the perception of bitterness and is gustducin-linked. May play a role in sensing the chemical composition of the gastrointestinal content. The activity of this receptor may stimulate alpha gustducin, mediate PLC-beta-2 activation and lead to the gating of TRPM5. In Pongo pygmaeus (Bornean orangutan), this protein is Taste receptor type 2 member 50 (TAS2R50).